Consider the following 295-residue polypeptide: MNTIIEEYLNFIQIEKGLSNNTIGAYRRDLKKYKDYLEDNKISHIDFIDRQIIQECLGHLIDMGQSSKSLARFISTIRSFHQFALREKYAAKDPTVLIETPKYEKKLPDVLEIDEVIALLETPDLTKNNGYRDRTMLELLYATGMRVTEIIQLDVEDVNLMMGFVRVFGKGNKERIVPLGDTVIEYLTTYIETVRPQLLKQTTTQALFLNMHGKSLSRQGIWKIIKQYGLKANINKTLTPHTLRHSFATHLLENGADLRAVQEMLGHSDISTTQLYTHVSKSQIRKMYTQFHPRA.

Residues 1–85 (MNTIIEEYLN…TIRSFHQFAL (85 aa)) form the Core-binding (CB) domain. The Tyr recombinase domain maps to 106–289 (KLPDVLEIDE…SKSQIRKMYT (184 aa)). Catalysis depends on residues Arg-146, Lys-170, His-241, Arg-244, and His-267. The active-site O-(3'-phospho-DNA)-tyrosine intermediate is the Tyr-276.

The protein belongs to the 'phage' integrase family. XerD subfamily. Forms a cyclic heterotetrameric complex composed of two molecules of XerC and two molecules of XerD.

Its subcellular location is the cytoplasm. Its function is as follows. Site-specific tyrosine recombinase, which acts by catalyzing the cutting and rejoining of the recombining DNA molecules. The XerC-XerD complex is essential to convert dimers of the bacterial chromosome into monomers to permit their segregation at cell division. It also contributes to the segregational stability of plasmids. In Staphylococcus epidermidis (strain ATCC 35984 / DSM 28319 / BCRC 17069 / CCUG 31568 / BM 3577 / RP62A), this protein is Tyrosine recombinase XerD.